The primary structure comprises 87 residues: Large ribosomal subunit protein bL27 (87 aa).

The disordered stretch occupies residues 1–22; it reads MAHKKAGGSSRNGRDSQGQRRG.

Belongs to the bacterial ribosomal protein bL27 family.

The sequence is that of Large ribosomal subunit protein bL27 from Nitratidesulfovibrio vulgaris (strain DP4) (Desulfovibrio vulgaris).